A 239-amino-acid polypeptide reads, in one-letter code: LexA repressor (239 aa).

The segment at residues 27 to 47 is a DNA-binding region (H-T-H motif); it reads FDEMKDALDLASKSGIHRLIT. Residues serine 159 and lysine 197 each act as for autocatalytic cleavage activity in the active site.

The protein belongs to the peptidase S24 family. In terms of assembly, homodimer.

It carries out the reaction Hydrolysis of Ala-|-Gly bond in repressor LexA.. In terms of biological role, represses a number of genes involved in the response to DNA damage (SOS response), including recA and lexA. In the presence of single-stranded DNA, RecA interacts with LexA causing an autocatalytic cleavage which disrupts the DNA-binding part of LexA, leading to derepression of the SOS regulon and eventually DNA repair. This is LexA repressor from Rhizobium radiobacter (Agrobacterium tumefaciens).